Consider the following 595-residue polypeptide: uncharacterized protein (595 aa).

An N-terminal signal peptide occupies residues 1–23 (MLSLSSPPWLLLLVLFFFANGSA). N-linked (GlcNAc...) asparagine glycosylation is found at Asn31, Asn63, Asn88, Asn112, Asn144, Asn187, Asn205, Asn389, Asn480, Asn492, and Asn506. Positions 61 to 83 (LENQTASSSNLNTNNEASDEQTG) are enriched in polar residues. Disordered stretches follow at residues 61–119 (LENQ…VSSL) and 141–164 (TALNGSGTPPEHQTIGQAPPTKGE). The segment covering 84–119 (NSNSNTSSHSRNINGLPSSNSNIDNANSNSSSVSSL) has biased composition (low complexity).

It is found in the secreted. This is an uncharacterized protein from Drosophila melanogaster (Fruit fly).